A 131-amino-acid polypeptide reads, in one-letter code: Fluoride-specific ion channel FluC (131 aa).

The next 4 membrane-spanning stretches (helical) occupy residues 10 to 30, 36 to 56, 71 to 91, and 99 to 119; these read AAVA…SGLV, FPMG…FLTW, LATV…YETV, and VLSI…VLGG. G78 and T81 together coordinate Na(+).

The protein belongs to the fluoride channel Fluc/FEX (TC 1.A.43) family.

The protein localises to the cell membrane. It catalyses the reaction fluoride(in) = fluoride(out). Na(+) is not transported, but it plays an essential structural role and its presence is essential for fluoride channel function. Functionally, fluoride-specific ion channel. Important for reducing fluoride concentration in the cell, thus reducing its toxicity. This Methanopyrus kandleri (strain AV19 / DSM 6324 / JCM 9639 / NBRC 100938) protein is Fluoride-specific ion channel FluC.